A 22-amino-acid chain; its full sequence is Mu-conotoxin KIIIB (22 aa).

The propeptide occupies 1-2 (KR). Intrachain disulfides connect C5–C13, C5–C19, C5–C20, C6–C13, C6–C19, C8–C19, and C8–C20. Pharmacophore key residues regions lie at residues 14–16 (RDH) and 18–19 (RC). Cysteine amide is present on C20.

This sequence belongs to the conotoxin M superfamily. In terms of assembly, monomer. Toxins with three different disulfide connectivities have been synthesized. The conotoxin mu-KIIIA-P1 shows the connectivity C1-C5, C2-C4, and C3-C6, whereas mu-KIIIA-P2 shows the connectivity C1-C6, C2-C4, and C3-C5. The conotoxin mu-KIIIA-N has the 'native' fold of the mu-conotoxin family (C1-C4, C2-C5, and C3-C6). Mu-KIIIA-P1 and mu-KIIIA-P2 are obtained by both thermodynamic oxidative folding and regioselective synthesis. Mu-KIIIA-P1 is the major oxidative folding product. Mu-KIIIA-N is only obtained by regioselective synthesis. Expressed by the venom duct.

The protein resides in the secreted. Its function is as follows. Mu-conotoxin KIIIA-P1: mu-conotoxins block voltage-gated sodium channels (Nav). This toxin potently blocks Nav1.2/SCN2A (IC(50)5-124 nM), Nav1.4/SCN4A (IC(50)=20-90 nM), and Nav1.7/SCN9A (IC(50)=290-413 nM). It moderately blocks Nav1.1/SCN1A, and mNav1.6/SCN8A. It also shows a very low activity on Nav1.3/SCN3A. This toxin binds a microsite within the pore different from the tetrodotoxin binding site 1 (tested on Nav1.2). The block is partial, with a residual current that can be completely blocked by TTX. The toxin probably docks at a more superficial site in the outer vestibule of the channel than does TTX. On rNav1.2/SCN2A, it produces a block that is only partially reversible. The block of Nav1.7 is modified when beta-subunits are coexpressed with the alpha subunit. Hence, blocks of channels containing beta-1 and beta-3 subunits are more potent (compared to channels without beta subunits), whereas blocks of channels containing beta-2 and beta-4 subunits are less potent (compared to channels without beta subunits). In terms of biological role, mu-conotoxin KIIIA-P2: This toxin potently blocks Nav1.2/SCN2A (Kd=230 nM, IC(50)=1.37 uM) and Nav1.4/SCN4A (Kd=830 nM, IC(50)=2 uM). It also moderately blocks Nav1.7/SCN9A (Kd=1.57 uM, IC(50)=5.4 uM). In addition, this toxin may also inhibit other sodium channels, as does Mu-conotoxin KIIIA-P1. Functionally, mu-conotoxin KIIIA-N: This toxin moderately blocks Nav1.2/SCN2A (IC(50)=875 nM), Nav1.4/SCN4A (IC(50)=472 nM), and Nav1.7/SCN9A (IC(50)=887 nM). Mu-conotoxin KIIIB-P1: This toxin potently blocks Nav1.2/SCN2A (Kd=470 nM). In addition, this toxin may also inhibit other sodium channels, as does Mu-conotoxin KIIIA-P1. Its function is as follows. Mu-conotoxin KIIIB-P2: This toxin potently blocks Nav1.2/SCN2A (Kd=26 nM). In addition, this toxin may also inhibit other sodium channels, as does Mu-conotoxin KIIIA-P1. This Conus kinoshitai (Kinoshita's cone) protein is Mu-conotoxin KIIIB.